We begin with the raw amino-acid sequence, 525 residues long: ATP synthase subunit alpha (525 aa).

172–179 (GDRQTGKT) lines the ATP pocket.

It belongs to the ATPase alpha/beta chains family. In terms of assembly, F-type ATPases have 2 components, CF(1) - the catalytic core - and CF(0) - the membrane proton channel. CF(1) has five subunits: alpha(3), beta(3), gamma(1), delta(1), epsilon(1). CF(0) has three main subunits: a(1), b(2) and c(9-12). The alpha and beta chains form an alternating ring which encloses part of the gamma chain. CF(1) is attached to CF(0) by a central stalk formed by the gamma and epsilon chains, while a peripheral stalk is formed by the delta and b chains.

It localises to the cell inner membrane. It catalyses the reaction ATP + H2O + 4 H(+)(in) = ADP + phosphate + 5 H(+)(out). Produces ATP from ADP in the presence of a proton gradient across the membrane. The alpha chain is a regulatory subunit. The sequence is that of ATP synthase subunit alpha from Parabacteroides distasonis (strain ATCC 8503 / DSM 20701 / CIP 104284 / JCM 5825 / NCTC 11152).